A 341-amino-acid polypeptide reads, in one-letter code: uncharacterized protein (341 aa).

Helical transmembrane passes span 6-26 (IIAG…TTLW), 63-83 (LLLC…WVLI), and 137-157 (AQGL…LSAV).

The protein localises to the cell membrane. This is an uncharacterized protein from Bacillus subtilis (strain 168).